A 341-amino-acid polypeptide reads, in one-letter code: MHSKFILYLSILAVFTVSFAGGERFKEAPKFFNSPECLTIENDEDFVCSDKAIHVAMTLDTAYLRGSMAVILSVLQHSSCPQNIVFHFVTSKQSHRLQNYVVASFPYLKFRIYPYDVAAISGLISTSIRSALDSPLNYARNYLADILPTCLSRVVYLDSDLILVDDISKLFSTHIPTDVVLAAPEYCNANFTTYFTPTFWSNPSLSITLSLNRRATPCYFNTGVMVIELKKWREGDYTRKIIEWMELQKRIRIYELGSLPPFLLVFAGNIAPVDHRWNQHGLGGDNFRGLCRDLHPGPVSLLHWSGKGKPWVRLDDGRPCPLDALWVPYDLLESRFDLIES.

The Cytoplasmic segment spans residues 1 to 4; that stretch reads MHSK. Residues 5 to 22 form a helical; Signal-anchor for type II membrane protein membrane-spanning segment; it reads FILYLSILAVFTVSFAGG. Residues 23–341 lie on the Lumenal side of the membrane; it reads ERFKEAPKFF…LESRFDLIES (319 aa). Residue asparagine 190 is glycosylated (N-linked (GlcNAc...) asparagine).

Belongs to the glycosyltransferase 8 family.

The protein resides in the golgi apparatus membrane. It participates in glycan metabolism; pectin biosynthesis. May be involved in pectin and/or xylans biosynthesis in cell walls. This is Probable galacturonosyltransferase-like 2 (GATL2) from Arabidopsis thaliana (Mouse-ear cress).